The chain runs to 290 residues: 6-carboxyhexanoate--CoA ligase (290 aa).

Belongs to the BioW family. As to quaternary structure, homodimer. Mg(2+) serves as cofactor.

The enzyme catalyses heptanedioate + ATP + CoA = 6-carboxyhexanoyl-CoA + AMP + diphosphate. Its pathway is metabolic intermediate metabolism; pimeloyl-CoA biosynthesis; pimeloyl-CoA from pimelate: step 1/1. Its function is as follows. Catalyzes the transformation of pimelate into pimeloyl-CoA with concomitant hydrolysis of ATP to AMP. The protein is 6-carboxyhexanoate--CoA ligase of Bacillus amyloliquefaciens (Bacillus velezensis).